A 471-amino-acid polypeptide reads, in one-letter code: Ribonuclease 3 (471 aa).

Residues 1 to 10 (MGSKVAGKKK) show a composition bias toward basic residues. Disordered regions lie at residues 1-29 (MGSK…RENI) and 168-189 (NLNE…PTKA). Positions 20 to 29 (ENGSQQRENI) are enriched in polar residues. The span at 172 to 184 (KEDEEEDEGEDSY) shows a compositional bias: acidic residues. Positions 227–331 (LSGSEMINAH…YIGGLMEDDP (105 aa)) constitute an RNase III domain. A DRBM domain is found at 369–437 (NAKRQLYSLI…AENALRDKKM (69 aa)). Residues 451–471 (SESVLKDPSQKNKKRKFSDTS) form a disordered region. The segment covering 461–471 (KNKKRKFSDTS) has biased composition (basic residues).

It catalyses the reaction Endonucleolytic cleavage to 5'-phosphomonoester.. Its function is as follows. DsRNA-specific nuclease that cleaves eukaryotic pre-ribosomal RNA at the U3 snoRNP-dependent A0 site in the 5'-external transcribed spacer (ETS) and in the 3'-ETS. In vitro, cleaves synthetic 5'-ETS RNA A0 site in the absence of snoRNA or other factors. Has an essential growth function in addition to pre-rRNA processing. This is Ribonuclease 3 (RNT1) from Saccharomyces cerevisiae (strain ATCC 204508 / S288c) (Baker's yeast).